A 93-amino-acid polypeptide reads, in one-letter code: Putative defensin-like protein 282 (93 aa).

Residues 1–25 (MANATSFIALAYLLASALMTTVVLG) form the signal peptide. 3 disulfide bridges follow: Cys-51–Cys-83, Cys-66–Cys-90, and Cys-72–Cys-92.

The protein belongs to the DEFL family.

Its subcellular location is the secreted. This Arabidopsis thaliana (Mouse-ear cress) protein is Putative defensin-like protein 282.